A 376-amino-acid polypeptide reads, in one-letter code: Queuine tRNA-ribosyltransferase (376 aa).

Asp93 (proton acceptor) is an active-site residue. Residues 93 to 97 (DSGGF), Asp147, Gln190, and Gly217 contribute to the substrate site. Residues 248-254 (GVGKPDD) are RNA binding. Asp267 acts as the Nucleophile in catalysis. Residues Cys305, Cys307, Cys310, and His336 each contribute to the Zn(2+) site.

This sequence belongs to the queuine tRNA-ribosyltransferase family. In terms of assembly, homodimer. Within each dimer, one monomer is responsible for RNA recognition and catalysis, while the other monomer binds to the replacement base PreQ1. Zn(2+) is required as a cofactor.

The catalysed reaction is 7-aminomethyl-7-carbaguanine + guanosine(34) in tRNA = 7-aminomethyl-7-carbaguanosine(34) in tRNA + guanine. It participates in tRNA modification; tRNA-queuosine biosynthesis. Functionally, catalyzes the base-exchange of a guanine (G) residue with the queuine precursor 7-aminomethyl-7-deazaguanine (PreQ1) at position 34 (anticodon wobble position) in tRNAs with GU(N) anticodons (tRNA-Asp, -Asn, -His and -Tyr). Catalysis occurs through a double-displacement mechanism. The nucleophile active site attacks the C1' of nucleotide 34 to detach the guanine base from the RNA, forming a covalent enzyme-RNA intermediate. The proton acceptor active site deprotonates the incoming PreQ1, allowing a nucleophilic attack on the C1' of the ribose to form the product. After dissociation, two additional enzymatic reactions on the tRNA convert PreQ1 to queuine (Q), resulting in the hypermodified nucleoside queuosine (7-(((4,5-cis-dihydroxy-2-cyclopenten-1-yl)amino)methyl)-7-deazaguanosine). This is Queuine tRNA-ribosyltransferase from Cereibacter sphaeroides (strain ATCC 17029 / ATH 2.4.9) (Rhodobacter sphaeroides).